The following is a 116-amino-acid chain: U16-barytoxin-Tl1a (116 aa).

Residues 1–20 (MKTIIVFLSLLVLATKFGDA) form the signal peptide. Residues 21-74 (KEGVNQKQKKEVTQNEFREEYLNEMAAMSLVQQLEAIERALFENEAGRNSRQKR) constitute a propeptide that is removed on maturation. Disulfide bonds link Cys-75–Cys-90, Cys-82–Cys-95, and Cys-89–Cys-110.

It belongs to the neurotoxin 14 (magi-1) family. 06 (ICK-Trit) subfamily. In terms of tissue distribution, expressed by the venom gland.

It localises to the secreted. Ion channel inhibitor. The sequence is that of U16-barytoxin-Tl1a from Trittame loki (Brush-footed trapdoor spider).